The chain runs to 654 residues: MDELLGEALSAENQTGESTVESEKLVTPEDVMTISSLEQRTLNPDLFLYKELVKAHLGERAASVIGMLVALGRLSVRELVEKIDGMDVDSVKTTLVSLTQLRCVKYLQETAISGKKTTYYYYNEEGIHILLYSGLIIDEIITQMRVNDEEEHKQLVAEIVQNVISLGSLTVEDYLSSVTSDSMKYTISSLFVQLCEMGYLIQISKLHYTPIEDLWQFLYEKHYKNIPRNSPLSDLKKRSQAKMNAKTDFAKIINKPNELSQILTVDPKTSLRIVKPTVSLTINLDRFMKGRRSKQLINLAKTRVGSVTAQVYKIALRLTEQKSPKIRDPLTQTGLLQDLEEAKSFQDEAELVEEKTPGLTFNAIDLARHLPAELDLRGSLLSRKPSDNKKRSGSNAAASLPSKKLKTEDGFVIPALPAAVSKSLQESGDTQEEDEEEEDLDADTEDPHSASLINSHLKILASSNFPFLNETKPGVYYVPYSKLMPVLKSSVYEYVIASTLGPSAMRLSRCIRDNKLVSEKIINSTALMKEKDIRSTLASLIRYNSVEIQEVPRTADRSASRAVFLFRCKETHSYNFMRQNLEWNMANLLFKKEKLKQENSTLLKKANRDDVKGRENELLLPSELNQLKMVNERELNVFARLSRLLSLWEVFQMA.

Phosphothreonine is present on T27. Disordered stretches follow at residues 381–401 (LSRK…ASLP) and 422–448 (KSLQ…EDPH). 2 positions are modified to phosphoserine: S392 and S394. Positions 429–444 (DTQEEDEEEEDLDADT) are enriched in acidic residues. Residues 581–602 (LEWNMANLLFKKEKLKQENSTL) are leucine-zipper.

The protein belongs to the eukaryotic RPC3/POLR3C RNA polymerase subunit family. In terms of assembly, component of the RNA polymerase III (Pol III) complex consisting of 17 subunits.

The protein localises to the cytoplasm. It is found in the nucleus. In terms of biological role, DNA-dependent RNA polymerase catalyzes the transcription of DNA into RNA using the four ribonucleoside triphosphates as substrates. Specific core component of RNA polymerase III which synthesizes small RNAs, such as 5S rRNA and tRNAs. The chain is DNA-directed RNA polymerase III subunit RPC3 (RPC82) from Saccharomyces cerevisiae (strain ATCC 204508 / S288c) (Baker's yeast).